The sequence spans 351 residues: Holliday junction branch migration complex subunit RuvB (351 aa).

Residues 1–182 (MNDRLITPDA…FGIVQRLEYY (182 aa)) are large ATPase domain (RuvB-L). Residues isoleucine 21, arginine 22, glycine 63, lysine 66, threonine 67, threonine 68, 129–131 (EDF), arginine 172, tyrosine 182, and arginine 219 each bind ATP. A Mg(2+)-binding site is contributed by threonine 67. Residues 183–253 (NVADLSGIVK…VAHAAMELLN (71 aa)) form a small ATPAse domain (RuvB-S) region. The segment at 256-351 (RNGFDEQDRR…QDAPPVGRER (96 aa)) is head domain (RuvB-H). 3 residues coordinate DNA: arginine 292, arginine 311, and arginine 316. The tract at residues 328–351 (LNPPRQPDTSPDLFQDAPPVGRER) is disordered.

Belongs to the RuvB family. In terms of assembly, homohexamer. Forms an RuvA(8)-RuvB(12)-Holliday junction (HJ) complex. HJ DNA is sandwiched between 2 RuvA tetramers; dsDNA enters through RuvA and exits via RuvB. An RuvB hexamer assembles on each DNA strand where it exits the tetramer. Each RuvB hexamer is contacted by two RuvA subunits (via domain III) on 2 adjacent RuvB subunits; this complex drives branch migration. In the full resolvosome a probable DNA-RuvA(4)-RuvB(12)-RuvC(2) complex forms which resolves the HJ.

The protein localises to the cytoplasm. The enzyme catalyses ATP + H2O = ADP + phosphate + H(+). Its function is as follows. The RuvA-RuvB-RuvC complex processes Holliday junction (HJ) DNA during genetic recombination and DNA repair, while the RuvA-RuvB complex plays an important role in the rescue of blocked DNA replication forks via replication fork reversal (RFR). RuvA specifically binds to HJ cruciform DNA, conferring on it an open structure. The RuvB hexamer acts as an ATP-dependent pump, pulling dsDNA into and through the RuvAB complex. RuvB forms 2 homohexamers on either side of HJ DNA bound by 1 or 2 RuvA tetramers; 4 subunits per hexamer contact DNA at a time. Coordinated motions by a converter formed by DNA-disengaged RuvB subunits stimulates ATP hydrolysis and nucleotide exchange. Immobilization of the converter enables RuvB to convert the ATP-contained energy into a lever motion, pulling 2 nucleotides of DNA out of the RuvA tetramer per ATP hydrolyzed, thus driving DNA branch migration. The RuvB motors rotate together with the DNA substrate, which together with the progressing nucleotide cycle form the mechanistic basis for DNA recombination by continuous HJ branch migration. Branch migration allows RuvC to scan DNA until it finds its consensus sequence, where it cleaves and resolves cruciform DNA. This is Holliday junction branch migration complex subunit RuvB from Alkalilimnicola ehrlichii (strain ATCC BAA-1101 / DSM 17681 / MLHE-1).